The primary structure comprises 121 residues: Histone H2B.6 (121 aa).

The tract at residues 1–28 (MAPKAEKKPKVEKRVPGKEGETSKKKAK) is disordered. 2 positions are modified to N6-acetyllysine: lysine 7 and lysine 13.

Belongs to the histone H2B family. In terms of assembly, the nucleosome is a histone octamer containing two molecules each of H2A, H2B, H3 and H4 assembled in one H3-H4 heterotetramer and two H2A-H2B heterodimers. The octamer wraps approximately 147 bp of DNA. Can be acetylated to form H2BK6ac and H2BK33ac. As to expression, expressed preferentially in meristematic tissues.

The protein localises to the nucleus. It is found in the chromosome. Core component of nucleosome. Nucleosomes wrap and compact DNA into chromatin, limiting DNA accessibility to the cellular machineries which require DNA as a template. Histones thereby play a central role in transcription regulation, DNA repair, DNA replication and chromosomal stability. DNA accessibility is regulated via a complex set of post-translational modifications of histones, also called histone code, and nucleosome remodeling. The chain is Histone H2B.6 (TH123) from Triticum aestivum (Wheat).